A 1392-amino-acid polypeptide reads, in one-letter code: DNA-directed RNA polymerase subunit beta (1392 aa).

It belongs to the RNA polymerase beta chain family. The RNAP catalytic core consists of 2 alpha, 1 beta, 1 beta' and 1 omega subunit. When a sigma factor is associated with the core the holoenzyme is formed, which can initiate transcription.

It carries out the reaction RNA(n) + a ribonucleoside 5'-triphosphate = RNA(n+1) + diphosphate. In terms of biological role, DNA-dependent RNA polymerase catalyzes the transcription of DNA into RNA using the four ribonucleoside triphosphates as substrates. The sequence is that of DNA-directed RNA polymerase subunit beta from Neisseria gonorrhoeae (strain ATCC 700825 / FA 1090).